A 278-amino-acid chain; its full sequence is Dermonecrotic toxin LhSicTox-alphaIV1iii (278 aa).

His-5 is an active-site residue. Residues Glu-25 and Asp-27 each contribute to the Mg(2+) site. His-41 (nucleophile) is an active-site residue. 2 disulfide bridges follow: Cys-45/Cys-51 and Cys-47/Cys-192. Position 85 (Asp-85) interacts with Mg(2+).

It belongs to the arthropod phospholipase D family. Class II subfamily. It depends on Mg(2+) as a cofactor. As to expression, expressed by the venom gland.

Its subcellular location is the secreted. The enzyme catalyses an N-(acyl)-sphingosylphosphocholine = an N-(acyl)-sphingosyl-1,3-cyclic phosphate + choline. The catalysed reaction is an N-(acyl)-sphingosylphosphoethanolamine = an N-(acyl)-sphingosyl-1,3-cyclic phosphate + ethanolamine. It catalyses the reaction a 1-acyl-sn-glycero-3-phosphocholine = a 1-acyl-sn-glycero-2,3-cyclic phosphate + choline. It carries out the reaction a 1-acyl-sn-glycero-3-phosphoethanolamine = a 1-acyl-sn-glycero-2,3-cyclic phosphate + ethanolamine. Dermonecrotic toxins cleave the phosphodiester linkage between the phosphate and headgroup of certain phospholipids (sphingolipid and lysolipid substrates), forming an alcohol (often choline) and a cyclic phosphate. This toxin acts on sphingomyelin (SM). It may also act on ceramide phosphoethanolamine (CPE), lysophosphatidylcholine (LPC) and lysophosphatidylethanolamine (LPE), but not on lysophosphatidylserine (LPS), and lysophosphatidylglycerol (LPG). It acts by transphosphatidylation, releasing exclusively cyclic phosphate products as second products. Induces dermonecrosis, hemolysis, increased vascular permeability, edema, inflammatory response, and platelet aggregation. The protein is Dermonecrotic toxin LhSicTox-alphaIV1iii of Loxosceles hirsuta (Recluse spider).